The sequence spans 256 residues: Leucyl/phenylalanyl-tRNA--protein transferase (256 aa).

The interval 1–21 is disordered; sequence MIPWLPDDSDSAPFPPTRLAL.

The protein belongs to the L/F-transferase family.

Its subcellular location is the cytoplasm. It carries out the reaction N-terminal L-lysyl-[protein] + L-leucyl-tRNA(Leu) = N-terminal L-leucyl-L-lysyl-[protein] + tRNA(Leu) + H(+). The catalysed reaction is N-terminal L-arginyl-[protein] + L-leucyl-tRNA(Leu) = N-terminal L-leucyl-L-arginyl-[protein] + tRNA(Leu) + H(+). It catalyses the reaction L-phenylalanyl-tRNA(Phe) + an N-terminal L-alpha-aminoacyl-[protein] = an N-terminal L-phenylalanyl-L-alpha-aminoacyl-[protein] + tRNA(Phe). Its function is as follows. Functions in the N-end rule pathway of protein degradation where it conjugates Leu, Phe and, less efficiently, Met from aminoacyl-tRNAs to the N-termini of proteins containing an N-terminal arginine or lysine. This chain is Leucyl/phenylalanyl-tRNA--protein transferase, found in Leptothrix cholodnii (strain ATCC 51168 / LMG 8142 / SP-6) (Leptothrix discophora (strain SP-6)).